The chain runs to 248 residues: Proteasome subunit alpha (248 aa).

The protein belongs to the peptidase T1A family. The 20S proteasome core is composed of 14 alpha and 14 beta subunits that assemble into four stacked heptameric rings, resulting in a barrel-shaped structure. The two inner rings, each composed of seven catalytic beta subunits, are sandwiched by two outer rings, each composed of seven alpha subunits. The catalytic chamber with the active sites is on the inside of the barrel. Has a gated structure, the ends of the cylinder being occluded by the N-termini of the alpha-subunits. Is capped by the proteasome-associated ATPase, ARC.

The protein localises to the cytoplasm. The protein operates within protein degradation; proteasomal Pup-dependent pathway. With respect to regulation, the formation of the proteasomal ATPase ARC-20S proteasome complex, likely via the docking of the C-termini of ARC into the intersubunit pockets in the alpha-rings, may trigger opening of the gate for substrate entry. Interconversion between the open-gate and close-gate conformations leads to a dynamic regulation of the 20S proteasome proteolysis activity. Component of the proteasome core, a large protease complex with broad specificity involved in protein degradation. This is Proteasome subunit alpha from Mycobacterium bovis (strain BCG / Pasteur 1173P2).